The primary structure comprises 375 residues: MQCALYDAGRCRSCQWITQLIPEQLSAKTADLKNLLADFPVEEWCAPVSGPEQGFRNKAKMVVSGSVEKPLLGMLHRDGTPEDLCDCPLYPASFAPVFAALKPFIACAGLTPYNVARKRGELKYILLTESQSDGGMMLRFVLRSETKLAQLRKALPWLQEQLPQLKVITVNIQPVHMAIMEGETEIYLTEQQALAERFNDVPLWIRPQSFFQTNPAVASQLYATVRDWVRQLPVKHMWDLFCGVGGFGLHCATPDMQLTGIEIAPEAIACAKQSAAELGLTRLQFQALDSTQFATAQGEVQELVLVNPPRRGIGKPLCDYLSTMAPRFIIYSSCNAQTMAKDIRELPGFRIERVQLFDMFPHTAHYEVLTLLVKQ.

Positions 3, 11, 14, and 87 each coordinate [4Fe-4S] cluster. Residues Q212, F241, E262, and N307 each coordinate S-adenosyl-L-methionine. C334 functions as the Nucleophile in the catalytic mechanism.

This sequence belongs to the class I-like SAM-binding methyltransferase superfamily. RNA M5U methyltransferase family. RlmC subfamily.

It carries out the reaction uridine(747) in 23S rRNA + S-adenosyl-L-methionine = 5-methyluridine(747) in 23S rRNA + S-adenosyl-L-homocysteine + H(+). In terms of biological role, catalyzes the formation of 5-methyl-uridine at position 747 (m5U747) in 23S rRNA. The sequence is that of 23S rRNA (uracil(747)-C(5))-methyltransferase RlmC from Shigella boydii serotype 18 (strain CDC 3083-94 / BS512).